A 379-amino-acid chain; its full sequence is NADH-quinone oxidoreductase subunit D 1 (379 aa).

This sequence belongs to the complex I 49 kDa subunit family. In terms of assembly, NDH-1 is composed of 14 different subunits. Subunits NuoB, C, D, E, F, and G constitute the peripheral sector of the complex.

Its subcellular location is the cell inner membrane. It catalyses the reaction a quinone + NADH + 5 H(+)(in) = a quinol + NAD(+) + 4 H(+)(out). In terms of biological role, NDH-1 shuttles electrons from NADH, via FMN and iron-sulfur (Fe-S) centers, to quinones in the respiratory chain. The immediate electron acceptor for the enzyme in this species is believed to be ubiquinone. Couples the redox reaction to proton translocation (for every two electrons transferred, four hydrogen ions are translocated across the cytoplasmic membrane), and thus conserves the redox energy in a proton gradient. This chain is NADH-quinone oxidoreductase subunit D 1, found in Anaeromyxobacter sp. (strain K).